Reading from the N-terminus, the 486-residue chain is Transcription factor bHLH49 (486 aa).

Residues 1–17 are compositionally biased toward basic and acidic residues; the sequence is MDLSAKDEFSAEKRNPD. 2 disordered regions span residues 1-30 and 194-300; these read MDLS…GDWR and KEST…KDGY. Polar residues-rich tracts occupy residues 198-221 and 243-254; these read VRSS…TQSS and QKNSEAAQSHRS. Low complexity predominate over residues 273-293; that stretch reads QSPNSPGKKSNSGKQQGKQSS. Positions 309-359 constitute a bHLH domain; the sequence is QATNSHSLAERVRREKISERMKFLQDLVPGCNKVTGKAVMLDEIINYVQSL.

As to quaternary structure, homodimer. Interacts with IBH1. As to expression, expressed constitutively in roots, stems, and flowers.

The protein localises to the nucleus. Functionally, transcriptional activator involved in cell elongation. Regulates the expression of a subset of genes involved in cell expansion by binding to the G-box motif. The sequence is that of Transcription factor bHLH49 (BHLH49) from Arabidopsis thaliana (Mouse-ear cress).